The sequence spans 496 residues: Ribose import ATP-binding protein RbsA (496 aa).

2 ABC transporter domains span residues 5–242 (IEMK…VGRS) and 252–496 (SQIG…TGGE). Position 37–44 (37–44 (GENGAGKS)) interacts with ATP.

The protein belongs to the ABC transporter superfamily. Ribose importer (TC 3.A.1.2.1) family. The complex is composed of an ATP-binding protein (RbsA), two transmembrane proteins (RbsC) and a solute-binding protein (RbsB).

Its subcellular location is the cell membrane. The enzyme catalyses D-ribose(out) + ATP + H2O = D-ribose(in) + ADP + phosphate + H(+). Part of the ABC transporter complex RbsABC involved in ribose import. Responsible for energy coupling to the transport system. In Bacillus cereus (strain ATCC 14579 / DSM 31 / CCUG 7414 / JCM 2152 / NBRC 15305 / NCIMB 9373 / NCTC 2599 / NRRL B-3711), this protein is Ribose import ATP-binding protein RbsA.